Reading from the N-terminus, the 191-residue chain is Dephospho-CoA kinase (191 aa).

One can recognise a DPCK domain in the interval 3–191 (AIGITGSYAS…KLILVIARKL (189 aa)). Position 11-16 (11-16 (ASGKTF)) interacts with ATP.

The protein belongs to the CoaE family.

The protein resides in the cytoplasm. The catalysed reaction is 3'-dephospho-CoA + ATP = ADP + CoA + H(+). Its pathway is cofactor biosynthesis; coenzyme A biosynthesis; CoA from (R)-pantothenate: step 5/5. Catalyzes the phosphorylation of the 3'-hydroxyl group of dephosphocoenzyme A to form coenzyme A. The polypeptide is Dephospho-CoA kinase (Rickettsia felis (strain ATCC VR-1525 / URRWXCal2) (Rickettsia azadi)).